Reading from the N-terminus, the 507-residue chain is Nucleoporin p54 (507 aa).

A run of 9 repeats spans residues 5–6 (FG), 25–26 (FG), 28–29 (FG), 53–54 (FG), 61–62 (FG), 63–64 (FG), 67–68 (FG), 87–88 (FG), and 444–445 (FG). The interval 5 to 445 (FGAPSGTSGT…SQIRMQNHFG (441 aa)) is 9 X 2 AA repeats of F-G.

This sequence belongs to the NUP54 family. In terms of assembly, component of the p62 complex, a complex composed of NUP62, NUP54, and the isoform p58 and isoform p45 of NUP58. Interacts with NUTF2. O-glycosylated.

The protein resides in the nucleus. Its subcellular location is the nuclear pore complex. It localises to the nucleus membrane. Its function is as follows. Component of the nuclear pore complex, a complex required for the trafficking across the nuclear membrane. This chain is Nucleoporin p54 (NUP54), found in Homo sapiens (Human).